An 813-amino-acid polypeptide reads, in one-letter code: Fibroblast growth factor receptor 2 (813 aa).

Residues 1–14 (MLLLALLAFLLVSR) form the signal peptide. The Extracellular segment spans residues 18–367 (RPSYSMVDDT…EDNPVPYYME (350 aa)). One can recognise an Ig-like C2-type 1 domain in the interval 21 to 117 (YSMVDDTTPE…NSHFFHVNVT (97 aa)). A disulfide bridge connects residues Cys-58 and Cys-103. Residues Asn-79 and Asn-115 are each glycosylated (N-linked (GlcNAc...) asparagine). Residues 119-143 (ASSSGDDEDDNDGSEDFTNDNNNIR) form a disordered region. The span at 123 to 136 (GDDEDDNDGSEDFT) shows a compositional bias: acidic residues. Ig-like C2-type domains are found at residues 145–237 (PYWT…YHLD) and 246–348 (PILQ…AWLT). Positions 152–169 (KMEKKLHAVSAANTVKLR) are heparin-binding. A disulfide bond links Cys-170 and Cys-221. N-linked (GlcNAc...) asparagine glycosylation is found at Asn-231, Asn-255, Asn-287, Asn-308, and Asn-321. Cysteines 268 and 332 form a disulfide. A helical transmembrane segment spans residues 368–388 (IGIYSTGIFIIFCMVVVCVVC). The Cytoplasmic portion of the chain corresponds to 389–813 (RMRQGAKKKK…FQHVNGVVKT (425 aa)). At Tyr-456 the chain carries Phosphotyrosine; by autocatalysis. The region spanning 471-760 (LTLGKPLGEG…LTLTTNEEYL (290 aa)) is the Protein kinase domain. ATP is bound by residues 477–485 (LGEGCFGQV), Lys-507, 555–557 (EYA), and Asn-561. Position 576 is a phosphotyrosine; by autocatalysis (Tyr-576). Asp-616 acts as the Proton acceptor in catalysis. A phosphotyrosine; by autocatalysis mark is found at Tyr-646, Tyr-647, and Tyr-759. The segment covering 771-792 (PSFPDSSCSASSSSGDDSVFSP) has biased composition (low complexity). The disordered stretch occupies residues 771-801 (PSFPDSSCSASSSSGDDSVFSPDPMPHDPCL).

The protein belongs to the protein kinase superfamily. Tyr protein kinase family. Fibroblast growth factor receptor subfamily. Monomer. Homodimer after ligand binding. Post-translationally, autophosphorylated. Binding of FGF family members together with heparan sulfate proteoglycan or heparin promotes receptor dimerization and autophosphorylation on tyrosine residues. Autophosphorylation occurs in trans between the two FGFR molecules present in the dimer. In terms of processing, N-glycosylated in the endoplasmic reticulum. The N-glycan chains undergo further maturation to an Endo H-resistant form in the Golgi apparatus. Ubiquitinated. FGFR2 is rapidly ubiquitinated after autophosphorylation, leading to internalization and degradation. Subject to degradation both in lysosomes and by the proteasome. Expressed in the anterior neural plate in early neurula stage embryos. Later in development, the protein is also expressed in the eye anlagen, midbrain-hindbrain boundary and otic vesicle.

It localises to the cell membrane. It is found in the golgi apparatus. The protein resides in the cytoplasmic vesicle. The enzyme catalyses L-tyrosyl-[protein] + ATP = O-phospho-L-tyrosyl-[protein] + ADP + H(+). With respect to regulation, present in an inactive conformation in the absence of bound ligand. Ligand binding leads to dimerization and activation by autophosphorylation on tyrosine residues. Tyrosine-protein kinase that acts as a cell-surface receptor for fibroblast growth factors and plays an essential role in the regulation of cell proliferation, differentiation, migration and apoptosis, and in the regulation of embryonic development. Required for normal embryonic patterning, limb bud development, lung morphogenesis, osteogenesis and skin development. Plays an essential role in the regulation of osteoblast differentiation, proliferation and apoptosis, and is required for normal skeleton development. Promotes cell proliferation in keratinocytes and immature osteoblasts, but promotes apoptosis in differentiated osteoblasts. Phosphorylates PLCG1, FRS2 and PAK4. Ligand binding leads to the activation of several signaling cascades. Activation of PLCG1 leads to the production of the cellular signaling molecules diacylglycerol and inositol 1,4,5-trisphosphate. Phosphorylation of FRS2 triggers recruitment of GRB2, GAB1, PIK3R1 and SOS1, and mediates activation of RAS, MAPK1/ERK2, MAPK3/ERK1 and the MAP kinase signaling pathway, as well as of the AKT1 signaling pathway. FGFR2 signaling is down-regulated by ubiquitination, internalization and degradation. Mutations that lead to constitutive kinase activation or impair normal FGFR2 maturation, internalization and degradation lead to aberrant signaling. Over-expressed FGFR2 promotes activation of STAT1. In Xenopus laevis (African clawed frog), this protein is Fibroblast growth factor receptor 2 (fgfr2).